A 209-amino-acid chain; its full sequence is MGKVHVFDHPLIQHKLSYIRDVHTGTKEFRELVDEVGMLMAYEVTRDLELQDVEIETPVTKMIAKRLTGKKLAFVPILRAGLGMTQGILTLVPAARIGHVGLYRDPETLEAVEYFVKLPQDIEEREIVVVDPMLATGASAIEAINSLKKRGAKNIRFMCLIAAPEGVEKLQAAHEDVDIFIAALDEKLDNHAYITPGLGDAGDRLFGTK.

5-phospho-alpha-D-ribose 1-diphosphate contacts are provided by residues arginine 79, arginine 104, and 131 to 139; that span reads DPMLATGAS. Residues isoleucine 194 and 199-201 contribute to the uracil site; that span reads GDA. Position 200 (aspartate 200) interacts with 5-phospho-alpha-D-ribose 1-diphosphate.

Belongs to the UPRTase family. Mg(2+) serves as cofactor.

It catalyses the reaction UMP + diphosphate = 5-phospho-alpha-D-ribose 1-diphosphate + uracil. Its pathway is pyrimidine metabolism; UMP biosynthesis via salvage pathway; UMP from uracil: step 1/1. With respect to regulation, allosterically activated by GTP. Functionally, catalyzes the conversion of uracil and 5-phospho-alpha-D-ribose 1-diphosphate (PRPP) to UMP and diphosphate. In Staphylococcus saprophyticus subsp. saprophyticus (strain ATCC 15305 / DSM 20229 / NCIMB 8711 / NCTC 7292 / S-41), this protein is Uracil phosphoribosyltransferase.